Consider the following 88-residue polypeptide: DNA-directed RNA polymerase subunit omega (88 aa).

The protein belongs to the RNA polymerase subunit omega family. As to quaternary structure, the RNAP catalytic core consists of 2 alpha, 1 beta, 1 beta' and 1 omega subunit. When a sigma factor is associated with the core the holoenzyme is formed, which can initiate transcription.

It carries out the reaction RNA(n) + a ribonucleoside 5'-triphosphate = RNA(n+1) + diphosphate. Functionally, promotes RNA polymerase assembly. Latches the N- and C-terminal regions of the beta' subunit thereby facilitating its interaction with the beta and alpha subunits. The chain is DNA-directed RNA polymerase subunit omega from Haemophilus influenzae (strain PittEE).